Consider the following 418-residue polypeptide: 3-phosphoshikimate 1-carboxyvinyltransferase (418 aa).

Lysine 26, serine 27, and arginine 31 together coordinate 3-phosphoshikimate. Lysine 26 lines the phosphoenolpyruvate pocket. Phosphoenolpyruvate contacts are provided by glycine 97 and arginine 125. 3-phosphoshikimate contacts are provided by serine 170, serine 171, glutamine 172, aspartate 297, asparagine 320, and lysine 324. Residue glutamine 172 participates in phosphoenolpyruvate binding. The active-site Proton acceptor is aspartate 297. Residues arginine 328, arginine 375, and lysine 400 each contribute to the phosphoenolpyruvate site.

The protein belongs to the EPSP synthase family. Monomer.

The protein localises to the cytoplasm. The catalysed reaction is 3-phosphoshikimate + phosphoenolpyruvate = 5-O-(1-carboxyvinyl)-3-phosphoshikimate + phosphate. It participates in metabolic intermediate biosynthesis; chorismate biosynthesis; chorismate from D-erythrose 4-phosphate and phosphoenolpyruvate: step 6/7. In terms of biological role, catalyzes the transfer of the enolpyruvyl moiety of phosphoenolpyruvate (PEP) to the 5-hydroxyl of shikimate-3-phosphate (S3P) to produce enolpyruvyl shikimate-3-phosphate and inorganic phosphate. The sequence is that of 3-phosphoshikimate 1-carboxyvinyltransferase from Pseudomonas syringae pv. tomato (strain ATCC BAA-871 / DC3000).